Consider the following 746-residue polypeptide: Hyperosmolality-gated Ca2+ permeable channel 2.1 (746 aa).

Helical transmembrane passes span 3–23, 90–110, 144–164, 357–377, 405–425, 445–465, 492–512, 560–580, 601–621, and 623–643; these read ISAL…LLSL, MVIF…AFVL, LWVH…LLYF, IATL…VTFI, VITG…VPPL, ACIK…ILSG, AGFF…CEIM, VIAP…YLIY, IFHN…LGFF, and LKLS…TLLF. The span at 692-702 shows a compositional bias: polar residues; that stretch reads LHSQKSSSKAE. The disordered stretch occupies residues 692–723; sequence LHSQKSSSKAECSNPFKKQELPDPEKLKPEEG. The segment covering 708–723 has biased composition (basic and acidic residues); that stretch reads KKQELPDPEKLKPEEG.

This sequence belongs to the CSC1 (TC 1.A.17) family.

The protein localises to the membrane. Its function is as follows. Acts as an osmosensitive calcium-permeable cation channel. The sequence is that of Hyperosmolality-gated Ca2+ permeable channel 2.1 from Arabidopsis thaliana (Mouse-ear cress).